The following is an 819-amino-acid chain: Mitosis inhibitor protein kinase SWE1 (819 aa).

Position 36 is a phosphoserine; by CDC5 (serine 36). Threonine 45 is subject to Phosphothreonine; by CDC28. Phosphoserine; by CDC28 occurs at positions 56 and 63. A Phosphoserine modification is found at serine 70. A Phosphothreonine; by CDC28 modification is found at threonine 74. The disordered stretch occupies residues 86–105; it reads KIEEEEEEEEEGKDEESVDS. Residues 88–102 show a composition bias toward acidic residues; it reads EEEEEEEEEGKDEES. Serine 102 carries the phosphoserine; by CDC5 modification. Serine 105 is modified (phosphoserine; by CDC28). Serine 111 carries the phosphoserine; by CDC5, CDC28 and CLA4 modification. Residues 117–168 are disordered; the sequence is ESVTTPITKRSAEKTNSPISLKQWNQRWFPKNDARTENTSSSSSYSVAKPNQ. At serine 118 the chain carries Phosphoserine; by CDC5. Over residues 118–142 the composition is skewed to polar residues; that stretch reads SVTTPITKRSAEKTNSPISLKQWNQ. Phosphothreonine; by CDC28 is present on residues threonine 121 and threonine 124. Phosphoserine; by CDC28 is present on serine 127. Position 131 is a phosphothreonine; by CDC5 (threonine 131). A Phosphoserine; by CDC28 modification is found at serine 133. Serine 136 carries the post-translational modification Phosphoserine; by CDC28 and CLA4. Phosphoserine; by CDC5 is present on residues serine 156 and serine 169. Threonine 196 is subject to Phosphothreonine; by CDC28. The residue at position 201 (serine 201) is a Phosphoserine; by CDC28. Serine 225 and serine 254 each carry phosphoserine; by CDC5. Serine 262 bears the Phosphoserine mark. Residues serine 263 and serine 266 each carry the phosphoserine; by CDC28 modification. A disordered region spans residues 278-297; it reads NQTNILSPTNSLVTNSSPQT. Threonine 280 bears the Phosphothreonine; by CDC5 mark. Residues serine 284 and serine 294 each carry the phosphoserine modification. At serine 312 the chain carries Phosphoserine; by CLA4. The interval 341–395 is disordered; sequence PIIISSHHSTRKNPQPYQFRGRYDNDTDEEISTPTRRKSIIGATSQTHRESRPLS. Serine 345 carries the phosphoserine modification. Phosphothreonine; by CDC28 is present on residues threonine 367 and threonine 373. Serine 379 bears the Phosphoserine; by CDC5 and CLA4 mark. Threonine 384 carries the post-translational modification Phosphothreonine; by CDC28. Residues serine 395 and serine 438 each carry the phosphoserine; by CDC5 and CLA4 modification. The Protein kinase domain maps to 444–794; sequence FTNVHSIGKG…NQILQTEECL (351 aa). Residues 450–458 and lysine 473 contribute to the ATP site; that span reads IGKGQFSTV. Aspartate 579 functions as the Proton acceptor in the catalytic mechanism. Residues asparagine 584 and aspartate 597 each contribute to the Mg(2+) site. Serine 610 carries the post-translational modification Phosphoserine; by CDC5. Threonine 629 is subject to Phosphothreonine; by CDC5. Threonine 688 is modified (phosphothreonine; by CDC5 and CLA4). Residue threonine 692 is modified to Phosphothreonine. Residues 707–716 show a composition bias toward polar residues; the sequence is SNNAGTSTVH. A disordered region spans residues 707–736; sequence SNNAGTSTVHNNSNINNPNMNNGNDNNNVN. Positions 717-736 are enriched in low complexity; that stretch reads NNSNINNPNMNNGNDNNNVN. Lysine 741 is covalently cross-linked (Glycyl lysine isopeptide (Lys-Gly) (interchain with G-Cter in ubiquitin)).

Belongs to the protein kinase superfamily. Ser/Thr protein kinase family. WEE1 subfamily. In terms of assembly, interacts with CLB2-CDC28. Partial hyperphosphorylation of SWE1 by CLB2-CDC28 stabilizes the ternary complex of SWE1 and CLB2-CDC28 and stimulates kinase activity of SWE1 in a positive feedback loop, maintaining CLB2-CDC28 in the tyrosine-phosphorylated state. Fully hyperphosphorylated SWE1 dissociates from CLB2-CDC28. Interacts with HSL7, KCC4 and MET30. Ubiquitinated by the SCF(MET30) complex, leading to its degradation by the proteasome. Post-translationally, phosphorylated progressively by CLA4, CLB2-CDC28 and CDC5. CLA4-dependent phosphorylation occurs in late S phase, followed by phosphorylation by CLB2-CDC28 in early G2, when the levels of mitotic CLB2 increases. This phosphorylation is critical for triggering subsequent SWE1-CDC5 interaction and CDC5-dependent phosphorylation. The resulting cumulative hyperphosphorylation down-regulates SWE1 by targeting it for ubiquitin-mediated degradation. This stepwise phosphorylation is thought to be a mechanism to integrate the different checkpoint requirements before entry into mitosis.

Its subcellular location is the bud neck. It localises to the nucleus. The enzyme catalyses L-seryl-[protein] + ATP = O-phospho-L-seryl-[protein] + ADP + H(+). It catalyses the reaction L-threonyl-[protein] + ATP = O-phospho-L-threonyl-[protein] + ADP + H(+). In terms of biological role, protein kinase that acts as a negative regulator of entry into mitosis (G2 to M transition) by phosphorylating and inhibiting the mitosis-promoting cyclin B-bound CDC28 at 'Tyr-19'. SWE1-mediated inhibition of CDC28 acts in a cell size or morphogenesis checkpoint to delay mitosis in response to defects in growth, actin organization or bud formation. Inhibits the activity of B-type cyclins in replication initiation strongly for CLB2, moderately for CLB3 and CLB4, and there is no apparent inhibition for CLB5 and CLB6, correlating with the normal expression timing of those cyclins. Hyperphosphorylation and degradation of SWE1 when all checkpoint requirement are met releases CLB2-CDC28 from inhibition and allows for progression through the cell cycle. SWE1-dependent CDC28 phosphorylation is also required for pachytene arrest upon activation of the recombination checkpoint during meiosis. Also involved in the regulation of nitrogen starvation- and short chain alcohol-induced filamentous growth, or filamentous differentiation in response to slowed DNA synthesis. Can act both on serines and on tyrosines. This is Mitosis inhibitor protein kinase SWE1 (SWE1) from Saccharomyces cerevisiae (strain ATCC 204508 / S288c) (Baker's yeast).